We begin with the raw amino-acid sequence, 429 residues long: 5-methylthioadenosine/S-adenosylhomocysteine deaminase (429 aa).

Residues H65 and H67 each contribute to the Zn(2+) site. Positions 94 and 182 each coordinate substrate. Residue H209 participates in Zn(2+) binding. Residues E212 and D297 each contribute to the substrate site. D297 lines the Zn(2+) pocket.

It belongs to the metallo-dependent hydrolases superfamily. MTA/SAH deaminase family. Requires Zn(2+) as cofactor.

The catalysed reaction is S-adenosyl-L-homocysteine + H2O + H(+) = S-inosyl-L-homocysteine + NH4(+). It catalyses the reaction S-methyl-5'-thioadenosine + H2O + H(+) = S-methyl-5'-thioinosine + NH4(+). Functionally, catalyzes the deamination of 5-methylthioadenosine and S-adenosyl-L-homocysteine into 5-methylthioinosine and S-inosyl-L-homocysteine, respectively. Is also able to deaminate adenosine. In Clostridium tetani (strain Massachusetts / E88), this protein is 5-methylthioadenosine/S-adenosylhomocysteine deaminase.